The primary structure comprises 236 residues: Uridylate kinase (236 aa).

An ATP-binding site is contributed by 10-13; sequence KLSG. Glycine 52 contributes to the UMP binding site. ATP contacts are provided by glycine 53 and arginine 57. Residues aspartate 72 and 133 to 140 each bind UMP; that span reads TGNPFFTT. Residues threonine 160, tyrosine 166, and aspartate 169 each coordinate ATP.

This sequence belongs to the UMP kinase family. In terms of assembly, homohexamer.

It localises to the cytoplasm. It carries out the reaction UMP + ATP = UDP + ADP. It functions in the pathway pyrimidine metabolism; CTP biosynthesis via de novo pathway; UDP from UMP (UMPK route): step 1/1. With respect to regulation, inhibited by UTP. Its function is as follows. Catalyzes the reversible phosphorylation of UMP to UDP. The protein is Uridylate kinase of Cupriavidus pinatubonensis (strain JMP 134 / LMG 1197) (Cupriavidus necator (strain JMP 134)).